The sequence spans 69 residues: Putative membrane protein insertion efficiency factor (69 aa).

This sequence belongs to the UPF0161 family.

Its subcellular location is the cell membrane. Functionally, could be involved in insertion of integral membrane proteins into the membrane. The polypeptide is Putative membrane protein insertion efficiency factor (Desulfitobacterium hafniense (strain Y51)).